A 906-amino-acid polypeptide reads, in one-letter code: Ectonucleotide pyrophosphatase/phosphodiesterase family member 1 (906 aa).

A disordered region spans residues 1-25; it reads MERDGEQAGQGPRHGPAGNGRELES. Topologically, residues 1–58 are cytoplasmic; it reads MERDGEQAGQGPRHGPAGNGRELESPAAASLLAPMDLGEEPLEKAERARTAKDPNTYK. S25 is modified (phosphoserine). The Di-leucine motif motif lies at 27–34; sequence AAASLLAP. The helical; Signal-anchor for type II membrane protein transmembrane segment at 59–79 threads the bilayer; sequence VLSLVLSVCVLTTILGCIFGL. At 80–906 the chain is on the extracellular side; that stretch reads KPSCAKEVKS…THLPIFSQED (827 aa). SMB domains lie at 86–126 and 127–170; these read EVKS…VEPT and HIWT…QEKK. 10 disulfides stabilise this stretch: C90–C104, C94–C122, C102–C115, C108–C114, C131–C148, C136–C166, C146–C159, C152–C158, C177–C223, and C185–C397. N161 carries an N-linked (GlcNAc...) asparagine glycan. Residues 173 to 573 are phosphodiesterase; the sequence is VEEACETIDA…APNNESHGSL (401 aa). Residues D200, T238, and N259 each contribute to the AMP site. Residues D200 and T238 each contribute to the Zn(2+) site. The active-site AMP-threonine intermediate is T238. Positions 238 and 259 each coordinate CMP. T238 and N259 together coordinate dTMP. 2 residues coordinate GMP: T238 and N259. T238 carries the post-translational modification Phosphothreonine. The N-linked (GlcNAc...) asparagine glycan is linked to N267. Residues L272, K277, and Y322 each coordinate GMP. AMP-binding residues include K277 and Y322. K277 and Y322 together coordinate CMP. Y322 serves as a coordination point for dTMP. An N-linked (GlcNAc...) asparagine glycan is attached at N323. AMP is bound at residue D358. D358, H362, D405, and H406 together coordinate Zn(2+). D358 provides a ligand contact to CMP. DTMP is bound at residue D358. Residue D358 coordinates GMP. A 2',3'-cGAMP-binding site is contributed by H362. H406 is an AMP binding site. Residue H406 coordinates CMP. A dTMP-binding site is contributed by H406. Position 406 (H406) interacts with GMP. 6 disulfides stabilise this stretch: C413/C512, C462/C849, C596/C653, C607/C707, C609/C692, and C819/C829. The N-linked (GlcNAc...) asparagine glycan is linked to N459. A 2',3'-cGAMP-binding site is contributed by S514. H517 serves as a coordination point for AMP. H517 serves as a coordination point for Zn(2+). H517 is a CMP binding site. A dTMP-binding site is contributed by H517. A GMP-binding site is contributed by H517. 2 N-linked (GlcNAc...) asparagine glycosylation sites follow: N567 and N624. A linker region spans residues 579 to 628; it reads KPIYTPSHPKEESFLSQCPIKSVSSDLGCTCDPSIVPIMDFEKQFNLTTD. Residues 635–906 are nuclease-like domain; sequence SMTVPNGRPR…THLPIFSQED (272 aa). D781, D783, D785, R787, and D789 together coordinate Ca(2+).

Belongs to the nucleotide pyrophosphatase/phosphodiesterase family. Ectonucleotide pyrophosphatase/phosphodiesterase family member 1: Homodimer. Ectonucleotide pyrophosphatase/phosphodiesterase family member 1: Interacts with INSR; leading to inhibit INSR autophosphorylation and subsequent activation of INSR kinase activity. Ectonucleotide pyrophosphatase/phosphodiesterase family member 1, secreted form: Monomeric. The cofactor is Zn(2+). Post-translationally, the secreted form is produced through cleavage at Lys-85 by intracellular processing.

The protein localises to the cell membrane. The protein resides in the basolateral cell membrane. It localises to the secreted. It catalyses the reaction Hydrolytically removes 5'-nucleotides successively from the 3'-hydroxy termini of 3'-hydroxy-terminated oligonucleotides.. The catalysed reaction is a ribonucleoside 5'-triphosphate + H2O = a ribonucleoside 5'-phosphate + diphosphate + H(+). It carries out the reaction ATP + H2O = AMP + diphosphate + H(+). The enzyme catalyses UTP + H2O = UMP + diphosphate + H(+). It catalyses the reaction GTP + H2O = GMP + diphosphate + H(+). The catalysed reaction is CTP + H2O = CMP + diphosphate + H(+). It carries out the reaction 2',3'-cGAMP + 2 H2O = GMP + AMP + 2 H(+). The enzyme catalyses P(1),P(4)-bis(5'-adenosyl) tetraphosphate + H2O = AMP + ATP + 2 H(+). It catalyses the reaction 3',5'-cyclic AMP + H2O = AMP + H(+). With respect to regulation, at low concentrations of ATP, a phosphorylated intermediate is formed which inhibits further hydrolysis. Nucleotide pyrophosphatase that generates diphosphate (PPi) and functions in bone mineralization and soft tissue calcification by regulating pyrophosphate levels. PPi inhibits bone mineralization and soft tissue calcification by binding to nascent hydroxyapatite crystals, thereby preventing further growth of these crystals. Preferentially hydrolyzes ATP, but can also hydrolyze other nucleoside 5' triphosphates such as GTP, CTP and UTP to their corresponding monophosphates with release of pyrophosphate, as well as diadenosine polyphosphates, and also 3',5'-cAMP to AMP. May also be involved in the regulation of the availability of nucleotide sugars in the endoplasmic reticulum and Golgi, and the regulation of purinergic signaling. Inhibits ectopic joint calcification and maintains articular chondrocytes by repressing hedgehog signaling; it is however unclear whether hedgehog inhibition is direct or indirect. Appears to modulate insulin sensitivity. Also involved in melanogenesis. Also able to hydrolyze 2',3'-cGAMP (cyclic GMP-AMP), a second messenger that activates TMEM173/STING and triggers type-I interferon production. 2',3'-cGAMP degradation takes place in the lumen or extracellular space, and not in the cytosol where it is produced; the role of 2',3'-cGAMP hydrolysis is therefore unclear. Not able to hydrolyze the 2',3'-cGAMP linkage isomer 3'-3'-cGAMP. The chain is Ectonucleotide pyrophosphatase/phosphodiesterase family member 1 from Rattus norvegicus (Rat).